A 350-amino-acid chain; its full sequence is MSLLCYNKGCGQHFDPNTNLPDSCRYHPGVPIFHDALKGWSCCRKRTVDFSEFLNIKGCTVGLHCAEKLPEVPPQPEGPATSSLQEQKPLNTIPKSAETLFRERPKSEMPPKLLPLLISQALGVALEQKELDQEPGAGLDNSLIWTGSSCQNPGCDAVYQGPESDATPCTYHPGAPRFHEGMKSWSCCGIQTLDFGAFLAQPGCRVGRHDWAKQLPASCRHDWHQTDSVVVLTVYGQIPLPAFNWVKASQTELHVHIVFDGNRVFQAQMKLWGVINVEQSSVSLMPSRVEISLVKADPGSWAQLEHPDSLAEKARAGVLLEMDEEESEDSDDDLSWTEEEDEEEEEAMGE.

Residues C5, C10, C24, and H27 each contribute to the Zn(2+) site. The region spanning C5–H64 is the CHORD 1 domain. The SH3-binding signature appears at P28–P31. Zn(2+) contacts are provided by C42, C43, C59, and H64. The SH3-binding motif lies at P70–P79. The disordered stretch occupies residues V72 to T92. Residues A80–T92 show a composition bias toward polar residues. Residues C150 and C155 each coordinate Zn(2+). One can recognise a CHORD 2 domain in the interval C150–H209. Residues Y159 to P162 carry the SH2-binding motif. Residues C169 and H172 each contribute to the Zn(2+) site. The short motif at P173 to P176 is the SH3-binding element. Positions 187, 188, 204, and 209 each coordinate Zn(2+). One can recognise a CS domain in the interval P216 to E305. The short motif at Y235–I238 is the SH2-binding element. The segment at G317–E350 is disordered. Residues E321–E350 show a composition bias toward acidic residues.

As to quaternary structure, interacts with beta-1 integrin subunit. This interaction is regulated by divalent cations, and it occurs only in absence of calcium. As to expression, expressed in skeletal and cardiac muscles but not in other tissues. Is localized in rows flanking the Z line containing alpha-actinin.

May play a role during maturation and/or organization of muscles cells. The sequence is that of Integrin beta-1-binding protein 2 (Itgb1bp2) from Mus musculus (Mouse).